The sequence spans 47 residues: DRDSCVDKSRCAKYGYYGQCEVCCKKAGHNGGTCMFFKCMCVNSKMN.

4 disulfide bridges follow: C5-C23, C11-C34, C20-C39, and C24-C41.

This sequence belongs to the ergtoxin family. Gamma-KTx 5 subfamily. In terms of tissue distribution, expressed by the venom gland.

It is found in the secreted. Its function is as follows. Reversibly blocks Kv11/ERG potassium channels. This Centruroides sculpturatus (Arizona bark scorpion) protein is Potassium channel toxin gamma-KTx 5.1.